The chain runs to 473 residues: Hyaluronidase-2 (473 aa).

The N-terminal stretch at 1–20 (MRAGLGPIITLALVLEVAWA) is a signal peptide. 2 cysteine pairs are disulfide-bonded: Cys-47-Cys-340 and Cys-211-Cys-227. N-linked (GlcNAc...) asparagine glycosylation is found at Asn-74 and Asn-103. The Proton donor role is filled by Glu-135. N-linked (GlcNAc...) asparagine glycosylation occurs at Asn-357. Residues 361 to 439 (ATQYCSWTQC…YLGWGGEQCQ (79 aa)) enclose the EGF-like domain. 3 disulfide bridges follow: Cys-365-Cys-376, Cys-370-Cys-427, and Cys-429-Cys-438. Asp-448 carries GPI-anchor amidated aspartate lipidation. Residues 449 to 473 (ASRAWAGAHLASLLGLVAMTLTWTL) constitute a propeptide, removed in mature form.

Belongs to the glycosyl hydrolase 56 family. As to quaternary structure, interacts with MST1R.

It localises to the cell membrane. The enzyme catalyses Random hydrolysis of (1-&gt;4)-linkages between N-acetyl-beta-D-glucosamine and D-glucuronate residues in hyaluronate.. Functionally, catalyzes hyaluronan degradation into small fragments that are endocytosed and degraded in lysosomes by HYAL1 and exoglycosidases. Essential for the breakdown of extracellular matrix hyaluronan. This is Hyaluronidase-2 (Hyal2) from Rattus norvegicus (Rat).